Reading from the N-terminus, the 356-residue chain is MVKENICIVYGGKSAEHDVSKLTAQNVLNAIDKERYLVDIIYITNDGLWKKKENITEEIKEIESLNMTDIEAGEITILLKESSNGKPYDAIFPLLHGPNGEDGTIQGLFEVLDLPYVGNGVLAASSSMDKLVMKQLFEHRGLPQLPYISFLRSEYEKYEGNIIKLVKDKLTYPVFVKPANLGSSVGISKCNNEDELKSGIEEAFQFDRKLVIEQGINAREVEVAVLGNDYPETTWPGEVIKDVAFYDYKSKYKDGKISLQIPAELDEEVQMTLRNMALEAFKATDCSGLVRADFFVTEDNQIFINETNAMPGFTAFSMYPSLWENMGLSYSDLITKLIDLAKERHEDKKKNKYTID.

One can recognise an ATP-grasp domain in the interval 134-339 (KQLFEHRGLP…YSDLITKLID (206 aa)). An ATP-binding site is contributed by 167 to 222 (KDKLTYPVFVKPANLGSSVGISKCNNEDELKSGIEEAFQFDRKLVIEQGINAREVE). Residues D293, E306, and N308 each contribute to the Mg(2+) site.

It belongs to the D-alanine--D-alanine ligase family. Mg(2+) is required as a cofactor. Mn(2+) serves as cofactor.

The protein localises to the cytoplasm. The enzyme catalyses 2 D-alanine + ATP = D-alanyl-D-alanine + ADP + phosphate + H(+). It participates in cell wall biogenesis; peptidoglycan biosynthesis. Its function is as follows. Cell wall formation. This Staphylococcus haemolyticus (strain JCSC1435) protein is D-alanine--D-alanine ligase.